The following is a 137-amino-acid chain: Basic phospholipase A2 homolog 2 (137 aa).

Positions 1 to 16 are cleaved as a signal peptide; that stretch reads MRTLWIMAVLLVGVEG. Intrachain disulfides connect Cys-42/Cys-131, Cys-44/Cys-60, Cys-59/Cys-111, Cys-65/Cys-137, Cys-66/Cys-104, Cys-73/Cys-97, and Cys-91/Cys-102. Positions 121–133 are important for membrane-damaging activities in eukaryotes and bacteria; heparin-binding; sequence KKYRYYLKPLCKK.

This sequence belongs to the phospholipase A2 family. Group II subfamily. K49 sub-subfamily. As to quaternary structure, homodimer; non-covalently linked. Binds to heparin. In terms of processing, it binds long-chain fatty acids covalently by a rapid, spontaneous, and autocatalytic process. When acylated, it binds to the surface of liposomes and isolated muscle membranes, with the fatty acid moiety inserted into the lipid bilayer and possibly acting as an anchor. In terms of tissue distribution, expressed by the venom gland.

It is found in the secreted. Its activity is regulated as follows. Heparin inhibits the myotoxic activity. Suramin inhibits the myotoxic activity. High level of membrane cholesterol content reduces cytolytic activity, whereas low level of membrane cholesterol content increases cytolytic activity. Snake venom phospholipase A2 homolog that lacks enzymatic activity. Is myotoxic and induces a dose-dependent edema in the mouse foot pad. Also exhibits strong anticoagulant effects by binding to factor Xa (F10) and inhibiting the prothrombinase activity (IC(50) is 3 nM). In addition, it shows cytotoxic activity to a variety of cell types and bactericidal activity to a variety of Gram-negative and Gram-positive bacteria. Also induces a very rapid release of large amounts of potassium ions and ATP from muscle cells, which accounts for the pain reaction characteristic of viperid envenomations. The released ATP amplifies the effect of the myotoxins, acting as a 'danger signal', which spreads and causes further damage by acting on purinergic receptors. A model of myotoxic mechanism has been proposed: an apo Lys49-PLA2 is activated by the entrance of a hydrophobic molecule (e.g. fatty acid) at the hydrophobic channel of the protein leading to a reorientation of a monomer. This reorientation causes a transition between 'inactive' to 'active' states, causing alignment of C-terminal and membrane-docking sites (MDoS) side-by-side and putting the membrane-disruption sites (MDiS) in the same plane, exposed to solvent and in a symmetric position for both monomers. The MDoS region stabilizes the toxin on membrane by the interaction of charged residues with phospholipid head groups. Subsequently, the MDiS region destabilizes the membrane with penetration of hydrophobic residues. This insertion causes a disorganization of the membrane, allowing an uncontrolled influx of ions (i.e. calcium and sodium), and eventually triggering irreversible intracellular alterations and cell death. The sequence is that of Basic phospholipase A2 homolog 2 from Bothrops asper (Terciopelo).